A 1883-amino-acid polypeptide reads, in one-letter code: DDB1- and CUL4-associated factor homolog 1 (1883 aa).

Disordered regions lie at residues 1-47 (MDGQ…QSVE) and 309-340 (KPGDDNSVRDDPSRHRLNRSKSRGRGRVHEGA). Acidic residues predominate over residues 37-47 (NPEEGEEQSVE). The segment covering 309 to 322 (KPGDDNSVRDDPSR) has biased composition (basic and acidic residues). Residues 323–334 (HRLNRSKSRGRG) show a composition bias toward basic residues. Residue Ser349 is modified to Phosphoserine. The tract at residues 882-924 (NKPPLAQNHQPVPGQATTRPSTDVAVGTQSTGNAPQTPVAPAS) is disordered. The segment covering 888–917 (QNHQPVPGQATTRPSTDVAVGTQSTGNAPQ) has biased composition (polar residues). A LisH domain is found at 1087 to 1119 (DSKELLLLIHEHLQASGLGDTASALLKEAQLTP). Disordered stretches follow at residues 1157–1202 (TSKP…QWPS), 1214–1260 (PKIN…ALPQ), and 1310–1377 (SELR…NPER). Residues 1238 to 1251 (LTFSPSFSSQSRKQ) show a composition bias toward low complexity. Residues 1310-1329 (SELRDSSVPGKRIDLGERRN) are compositionally biased toward basic and acidic residues. Residues 1330–1362 (STFADGSGLQTPASALDANQSGSSRLGQMTPAS) show a composition bias toward polar residues. 5 WD repeats span residues 1464 to 1503 (DETALFTCIALLGGTNHIAVGSHAGEIKIFEASSGSMLES), 1506 to 1546 (GHQA…GGPR), 1548 to 1586 (SFDGCKAAKFSNSGLQFAALSCEASRKDVLLYDVQTCSP), 1587 to 1626 (CQKLTDTVTSSRSNPYSLVHFSPCDTLILWNGVLWDRRIP), and 1633 to 1671 (DQFTDYGGGGFHPSRNEVIINSEIWDMRTFKLLRSVPSL). Short sequence motifs (DWD box) lie at residues 1619–1626 (VLWDRRIP) and 1655–1662 (EIWDMRTF). A disordered region spans residues 1763-1883 (YEIGRRRPTD…DDYRDNIRSS (121 aa)). Composition is skewed to acidic residues over residues 1773–1796 (DDSDPDDDDETEDEDEDDEEEDDL) and 1808–1864 (DSGD…DGEM).

This sequence belongs to the VPRBP/DCAF1 family. In terms of assembly, component of the CUL4-RBX1-DDB1-DCAF1 E3 ubiquitin-protein ligase complex. Interacts with DDB1A through its DWD motifs. Ubiquitous but predominantly expressed in the inflorescence and roots.

It is found in the nucleus. The protein operates within protein modification; protein ubiquitination. In terms of biological role, component of the CUL4-RBX1-DDB1-DCAF1 E3 ubiquitin-protein ligase complex, DCAF1 may function as the substrate recognition module within this complex. Appears to be required for plant embryogenesis and to affect several other developmental processes including leaf, shoot, and flower development. The chain is DDB1- and CUL4-associated factor homolog 1 (DCAF1) from Arabidopsis thaliana (Mouse-ear cress).